We begin with the raw amino-acid sequence, 325 residues long: uncharacterized protein (325 aa).

2 disordered regions span residues 32–65 and 99–152; these read LSTP…VPPI and GDSL…ASSG. The region spanning 153-291 is the Globin domain; it reads LVPSLNRLRI…LFTGVRDGYY (139 aa).

This is an uncharacterized protein from Caenorhabditis elegans.